We begin with the raw amino-acid sequence, 387 residues long: Sorting nexin-7 (387 aa).

The PX domain occupies 30-151 (KDLFITVDEP…IFLTAQAWEL (122 aa)). A 1,2-diacyl-sn-glycero-3-phospho-(1D-myo-inositol-3-phosphate) contacts are provided by Arg-73, Gln-75, Lys-103, and Arg-117. One can recognise a BAR domain in the interval 178-387 (GVKNRPEEFM…HLEETSEDKP (210 aa)).

This sequence belongs to the sorting nexin family. As to quaternary structure, heterodimer; heterodimerizes with SNX4.

The protein resides in the early endosome membrane. Involved in the regulation of endocytosis and in several stages of intracellular trafficking. Together with SNX4, involved in autophagosome assembly by regulating trafficking and recycling of phospholipid scramblase ATG9A. The polypeptide is Sorting nexin-7 (SNX7) (Macaca fascicularis (Crab-eating macaque)).